Reading from the N-terminus, the 503-residue chain is Cytochrome P450 3A7 (503 aa).

Cys-442 is a heme binding site.

Belongs to the cytochrome P450 family. Heme is required as a cofactor. As to expression, expressed in fetal liver (at protein level).

It is found in the endoplasmic reticulum membrane. The protein localises to the microsome membrane. It catalyses the reaction an organic molecule + reduced [NADPH--hemoprotein reductase] + O2 = an alcohol + oxidized [NADPH--hemoprotein reductase] + H2O + H(+). The enzyme catalyses 3beta-hydroxyandrost-5-en-17-one + reduced [NADPH--hemoprotein reductase] + O2 = 3beta,16alpha-dihydroxy-androst-5-en-17-one + oxidized [NADPH--hemoprotein reductase] + H2O + H(+). The catalysed reaction is dehydroepiandrosterone 3-sulfate + reduced [NADPH--hemoprotein reductase] + O2 = 16alpha-hydroxydehydroepiandrosterone 3-sulfate + oxidized [NADPH--hemoprotein reductase] + H2O + H(+). It carries out the reaction testosterone + reduced [NADPH--hemoprotein reductase] + O2 = 6beta,17beta-dihydroxyandrost-4-en-3-one + oxidized [NADPH--hemoprotein reductase] + H2O + H(+). It catalyses the reaction estrone + reduced [NADPH--hemoprotein reductase] + O2 = 2-hydroxyestrone + oxidized [NADPH--hemoprotein reductase] + H2O + H(+). The enzyme catalyses estrone + reduced [NADPH--hemoprotein reductase] + O2 = 4-hydroxyestrone + oxidized [NADPH--hemoprotein reductase] + H2O + H(+). The catalysed reaction is estrone + reduced [NADPH--hemoprotein reductase] + O2 = 16alpha-hydroxyestrone + oxidized [NADPH--hemoprotein reductase] + H2O + H(+). It carries out the reaction 17beta-estradiol + reduced [NADPH--hemoprotein reductase] + O2 = 2-hydroxy-17beta-estradiol + oxidized [NADPH--hemoprotein reductase] + H2O + H(+). It catalyses the reaction 17beta-estradiol + reduced [NADPH--hemoprotein reductase] + O2 = 6beta-hydroxyestradiol-17beta + oxidized [NADPH--hemoprotein reductase] + H2O + H(+). The enzyme catalyses all-trans-retinoate + reduced [NADPH--hemoprotein reductase] + O2 = all-trans-4-hydroxyretinoate + oxidized [NADPH--hemoprotein reductase] + H2O + H(+). The catalysed reaction is all-trans-retinoate + reduced [NADPH--hemoprotein reductase] + O2 = all-trans-18-hydroxyretinoate + oxidized [NADPH--hemoprotein reductase] + H2O + H(+). The protein operates within steroid hormone biosynthesis. Its pathway is cofactor metabolism; retinol metabolism. Functionally, a cytochrome P450 monooxygenase involved in the metabolism of steroid hormones and vitamins during embryogenesis. Mechanistically, uses molecular oxygen inserting one oxygen atom into a substrate, and reducing the second into a water molecule, with two electrons provided by NADPH via cytochrome P450 reductase (NADPH--hemoprotein reductase). Catalyzes the hydroxylation of carbon-hydrogen bonds. Metabolizes 3beta-hydroxyandrost-5-en-17-one (dehydroepiandrosterone, DHEA), a precursor in the biosynthesis of androgen and estrogen steroid hormones. Exhibits high catalytic activity for the formation of hydroxyestrogens from estrone (E1), particularly D-ring hydroxylated estrone at the C16-alpha position. Mainly hydroxylates all trans-retinoic acid (atRA) to 4-hydroxyretinoate and may play a role in atRA clearance during fetal development. Also involved in the oxidative metabolism of xenobiotics including anticonvulsants. The polypeptide is Cytochrome P450 3A7 (Homo sapiens (Human)).